A 147-amino-acid polypeptide reads, in one-letter code: UPF0178 protein AFE_3267 (147 aa).

This sequence belongs to the UPF0178 family.

The polypeptide is UPF0178 protein AFE_3267 (Acidithiobacillus ferrooxidans (strain ATCC 23270 / DSM 14882 / CIP 104768 / NCIMB 8455) (Ferrobacillus ferrooxidans (strain ATCC 23270))).